The sequence spans 935 residues: C-1-tetrahydrofolate synthase, cytoplasmic (935 aa).

An N-acetylmethionine modification is found at M1. Residues 2–291 form a methylenetetrahydrofolate dehydrogenase and methenyltetrahydrofolate cyclohydrolase (D/C) domain region; it reads APAGILNGKL…MLMQSTVESA (290 aa). Substrate-binding positions include 52 to 56 and 99 to 101; these read YINVK and VQL. K56 is a catalytic residue. NADP(+) contacts are provided by residues 172 to 174 and S197; that span reads GRS. 272 to 276 provides a ligand contact to substrate; sequence PGGVG. Positions 310–935 are formyltetrahydrofolate synthetase domain; that stretch reads LNLKTPVPSD…PETEQVNGLF (626 aa). The residue at position 318 (S318) is a Phosphoserine. ATP is bound at residue 380 to 387; sequence TPLGEGKS. A phosphoserine mark is found at S413 and S490.

This sequence in the N-terminal section; belongs to the tetrahydrofolate dehydrogenase/cyclohydrolase family. The protein in the C-terminal section; belongs to the formate--tetrahydrofolate ligase family. In terms of assembly, homodimer.

It is found in the cytoplasm. It catalyses the reaction (6R)-5,10-methylene-5,6,7,8-tetrahydrofolate + NADP(+) = (6R)-5,10-methenyltetrahydrofolate + NADPH. The enzyme catalyses (6R)-5,10-methenyltetrahydrofolate + H2O = (6R)-10-formyltetrahydrofolate + H(+). It carries out the reaction (6S)-5,6,7,8-tetrahydrofolate + formate + ATP = (6R)-10-formyltetrahydrofolate + ADP + phosphate. Its pathway is one-carbon metabolism; tetrahydrofolate interconversion. Trifunctional enzyme that catalyzes the interconversion of three forms of one-carbon-substituted tetrahydrofolate: (6R)-5,10-methylene-5,6,7,8-tetrahydrofolate, 5,10-methenyltetrahydrofolate and (6S)-10-formyltetrahydrofolate. These derivatives of tetrahydrofolate are differentially required in nucleotide and amino acid biosynthesis, (6S)-10-formyltetrahydrofolate being required for purine biosynthesis while (6R)-5,10-methylene-5,6,7,8-tetrahydrofolate is used for serine and methionine biosynthesis for instance. The protein is C-1-tetrahydrofolate synthase, cytoplasmic (Mthfd1) of Mus musculus (Mouse).